The following is a 313-amino-acid chain: Nematocyst expressed protein 8 (313 aa).

The N-terminal stretch at 1 to 19 is a signal peptide; the sequence is MLRRPLLLVLFTVFSTLYA. The tract at residues 24–56 is disordered; sequence GVSPPTNESEAEVSPGDDEGPPEPGNEPDVNWR. The segment covering 32 to 44 has biased composition (acidic residues); it reads SEAEVSPGDDEGP. 3 ShKT domains span residues 65–99, 109–145, and 151–186; these read CKDKGKDCESLADEGNCLKKLNYAVGNCPWTCRFC, CKDLAGERHCNGWKVKGDCVRLPDYMMQNCKLSCELC, and FKYTDEDVRCPEWAQAGYCSTNTDINLKCPHSCRKY. Cystine bridges form between Cys-65–Cys-99, Cys-72–Cys-92, Cys-81–Cys-96, Cys-109–Cys-145, Cys-127–Cys-142, Cys-160–Cys-179, and Cys-169–Cys-183. Low complexity predominate over residues 222 to 244; the sequence is TAAPSTQPAETTKAPPNTAAPTA. The segment at 222 to 313 is disordered; it reads TAAPSTQPAE…LCDEKHSSQQ (92 aa). Residues 245-265 are compositionally biased toward pro residues; that stretch reads APTPAPTPAPAPAPTPAPVAP. Over residues 280 to 297 the composition is skewed to acidic residues; that stretch reads TPEEQDDNSADESTEIEA.

Belongs to the NEP3 family. As to expression, nematocytes. In late planulae, is only expressed in a handful of nematocytes in the lower pharynx. Is absent from the tentacles and outer body wall.

Its subcellular location is the nematocyst. The protein localises to the secreted. Its function is as follows. Probable toxin probably only used for predation. The protein is Nematocyst expressed protein 8 of Nematostella vectensis (Starlet sea anemone).